The sequence spans 306 residues: Low density lipoprotein receptor adapter protein 1 (306 aa).

M1 is subject to N-acetylmethionine. Phosphoserine is present on S14. A PID domain is found at 44–168; that stretch reads GMVFSLKYLG…VAQAFKVAFE (125 aa). The segment at 178-204 is disordered; it reads EKREKANQEGGDVPGTRRDSTPSLKTS. S197 and S200 each carry phosphoserine. Residues 210 to 214 carry the Clathrin box motif; that stretch reads LLDLE. Positions 247 to 274 are AP-2 complex binding; it reads WELDDGLDEAFSRLAQSRTNPQVLDTGL. Residues 255-264 carry the [DE]-X(1,2)-F-X-X-[FL]-X-X-X-R motif motif; the sequence is EAFSRLAQSR.

Interacts (via PID domain) with LDLR (via NPXY motifs). Binds to soluble clathrin trimers. Interacts with AP2B1; the interaction mediates the association with the AP-2 complex. Interacts with VLDLR. Interacts with LRP2.

It is found in the cytoplasm. Functionally, adapter protein (clathrin-associated sorting protein (CLASP)) required for efficient endocytosis of the LDL receptor (LDLR) in polarized cells such as hepatocytes and lymphocytes, but not in non-polarized cells (fibroblasts). May be required for LDL binding and internalization but not for receptor clustering in coated pits. May facilitate the endocytosis of LDLR and LDLR-LDL complexes from coated pits by stabilizing the interaction between the receptor and the structural components of the pits. May also be involved in the internalization of other LDLR family members. Binds to phosphoinositides, which regulate clathrin bud assembly at the cell surface. Required for trafficking of LRP2 to the endocytic recycling compartment which is necessary for LRP2 proteolysis, releasing a tail fragment which translocates to the nucleus and mediates transcriptional repression. The sequence is that of Low density lipoprotein receptor adapter protein 1 from Rattus norvegicus (Rat).